We begin with the raw amino-acid sequence, 101 residues long: Unclassified hydrophobin dewD (101 aa).

An N-terminal signal peptide occupies residues 1 to 21 (MHLSTSAAAILALSLAGPTMA). 4 disulfide bridges follow: Cys-27–Cys-81, Cys-41–Cys-73, Cys-42–Cys-60, and Cys-82–Cys-91.

Self-assembles to form functional amyloid fibrils called rodlets. Self-assembly into fibrillar rodlets occurs spontaneously at hydrophobic:hydrophilic interfaces and the rodlets further associate laterally to form amphipathic monolayers.

The protein resides in the secreted. Its subcellular location is the spore wall. Its function is as follows. Aerial growth, conidiation, and dispersal of filamentous fungi in the environment rely upon a capability of their secreting small amphipathic proteins called hydrophobins (HPBs) with low sequence identity. Class I can self-assemble into an outermost layer of rodlet bundles on aerial cell surfaces, conferring cellular hydrophobicity that supports fungal growth, development and dispersal; whereas Class II form highly ordered films at water-air interfaces through intermolecular interactions but contribute nothing to the rodlet structure. DewD is an unclassified hydrophobin that contributes to the hydrophobicity of the spore surface. The protein is Unclassified hydrophobin dewD of Emericella nidulans (strain FGSC A4 / ATCC 38163 / CBS 112.46 / NRRL 194 / M139) (Aspergillus nidulans).